Consider the following 477-residue polypeptide: Cysteine--tRNA ligase (477 aa).

Cysteine 30 is a binding site for Zn(2+). The 'HIGH' region signature appears at 32–42; the sequence is PTVYDYNHIGH. Residues cysteine 209, histidine 234, and glutamate 238 each coordinate Zn(2+). Residues 267 to 271 carry the 'KMSKS' region motif; that stretch reads KMSKS. Lysine 270 contacts ATP.

It belongs to the class-I aminoacyl-tRNA synthetase family. Requires Zn(2+) as cofactor.

The protein resides in the cytoplasm. The enzyme catalyses tRNA(Cys) + L-cysteine + ATP = L-cysteinyl-tRNA(Cys) + AMP + diphosphate. This chain is Cysteine--tRNA ligase, found in Staphylothermus marinus (strain ATCC 43588 / DSM 3639 / JCM 9404 / F1).